The following is a 102-amino-acid chain: Large ribosomal subunit protein bL21 (102 aa).

The protein belongs to the bacterial ribosomal protein bL21 family. In terms of assembly, part of the 50S ribosomal subunit. Contacts protein L20.

Functionally, this protein binds to 23S rRNA in the presence of protein L20. The sequence is that of Large ribosomal subunit protein bL21 from Campylobacter jejuni subsp. jejuni serotype O:6 (strain 81116 / NCTC 11828).